Reading from the N-terminus, the 341-residue chain is Tyrosine recombinase XerC (341 aa).

The 92-residue stretch at 14-105 folds into the Core-binding (CB) domain; it reads PDAAEALERW…GVRSFFRWAD (92 aa). Residues 126–309 form the Tyr recombinase domain; that stretch reads PLPRPLAADD…DAEHLLSVYE (184 aa). Catalysis depends on residues Arg-169, Lys-193, His-261, Arg-264, and His-287. Tyr-296 functions as the O-(3'-phospho-DNA)-tyrosine intermediate in the catalytic mechanism.

The protein belongs to the 'phage' integrase family. XerC subfamily. Forms a cyclic heterotetrameric complex composed of two molecules of XerC and two molecules of XerD.

Its subcellular location is the cytoplasm. Site-specific tyrosine recombinase, which acts by catalyzing the cutting and rejoining of the recombining DNA molecules. The XerC-XerD complex is essential to convert dimers of the bacterial chromosome into monomers to permit their segregation at cell division. It also contributes to the segregational stability of plasmids. The sequence is that of Tyrosine recombinase XerC from Rhodospirillum centenum (strain ATCC 51521 / SW).